Here is a 145-residue protein sequence, read N- to C-terminus: Protein BUD31 homolog 2 (145 aa).

Belongs to the BUD31 (G10) family.

It is found in the nucleus. The polypeptide is Protein BUD31 homolog 2 (Oryza sativa subsp. japonica (Rice)).